The following is a 299-amino-acid chain: uncharacterized protein (299 aa).

The region spanning 1–59 (MDKIHAMQLFIKVAELESFSRAADFFALPKGSVSRQIQALEHQLGTQLLQRTTRRVKLT) is the HTH lysR-type domain. Residues 19 to 38 (FSRAADFFALPKGSVSRQIQ) constitute a DNA-binding region (H-T-H motif).

It belongs to the LysR transcriptional regulatory family.

This is an uncharacterized protein from Escherichia coli (strain K12).